The following is a 107-amino-acid chain: ATP synthase subunit c (107 aa).

The next 3 helical transmembrane spans lie at 4 to 24, 29 to 49, and 74 to 94; these read IVFL…SMNQ, FSIL…AIGM, and MFIA…IALI.

This sequence belongs to the ATPase C chain family. In terms of assembly, F-type ATPases have 2 components, F(1) - the catalytic core - and F(0) - the membrane proton channel. F(1) has five subunits: alpha(3), beta(3), gamma(1), delta(1), epsilon(1). F(0) has three main subunits: a(1), b(2) and c(10-14). The alpha and beta chains form an alternating ring which encloses part of the gamma chain. F(1) is attached to F(0) by a central stalk formed by the gamma and epsilon chains, while a peripheral stalk is formed by the delta and b chains.

It localises to the cell inner membrane. In terms of biological role, f(1)F(0) ATP synthase produces ATP from ADP in the presence of a proton or sodium gradient. F-type ATPases consist of two structural domains, F(1) containing the extramembraneous catalytic core and F(0) containing the membrane proton channel, linked together by a central stalk and a peripheral stalk. During catalysis, ATP synthesis in the catalytic domain of F(1) is coupled via a rotary mechanism of the central stalk subunits to proton translocation. Its function is as follows. Key component of the F(0) channel; it plays a direct role in translocation across the membrane. A homomeric c-ring of between 10-14 subunits forms the central stalk rotor element with the F(1) delta and epsilon subunits. This chain is ATP synthase subunit c, found in Campylobacter lari (strain RM2100 / D67 / ATCC BAA-1060).